The primary structure comprises 240 residues: 1-(5-phosphoribosyl)-5-[(5-phosphoribosylamino)methylideneamino] imidazole-4-carboxamide isomerase (240 aa).

The active-site Proton acceptor is Asp-8. Asp-130 acts as the Proton donor in catalysis.

It belongs to the HisA/HisF family.

Its subcellular location is the cytoplasm. The catalysed reaction is 1-(5-phospho-beta-D-ribosyl)-5-[(5-phospho-beta-D-ribosylamino)methylideneamino]imidazole-4-carboxamide = 5-[(5-phospho-1-deoxy-D-ribulos-1-ylimino)methylamino]-1-(5-phospho-beta-D-ribosyl)imidazole-4-carboxamide. It participates in amino-acid biosynthesis; L-histidine biosynthesis; L-histidine from 5-phospho-alpha-D-ribose 1-diphosphate: step 4/9. In Elusimicrobium minutum (strain Pei191), this protein is 1-(5-phosphoribosyl)-5-[(5-phosphoribosylamino)methylideneamino] imidazole-4-carboxamide isomerase.